The following is a 353-amino-acid chain: Rhodopsin (353 aa).

Topologically, residues 1 to 36 (MNGTEGPYFYIPMVNTTGIVRSPYEYPQYYLVNPAA) are extracellular. Asn-2 and Asn-15 each carry an N-linked (GlcNAc...) asparagine glycan. The helical transmembrane segment at 37-61 (YAALGAYMFLLILVGFPINFLTLYV) threads the bilayer. Topologically, residues 62–73 (TIEHKKLRTPLN) are cytoplasmic. A helical membrane pass occupies residues 74 to 96 (YILLNLAVANLFMVFGGFTTTMY). Over 97-110 (TSMHGYFVLGRLGC) the chain is Extracellular. A disulfide bridge connects residues Cys-110 and Cys-187. The helical transmembrane segment at 111–133 (NLEGFFATLGGEIALWSLVVLAI) threads the bilayer. The 'Ionic lock' involved in activated form stabilization motif lies at 134–136 (ERW). Residues 134–152 (ERWMVVCKPISNFRFGEDH) are Cytoplasmic-facing. Residues 153–173 (AIMGLAFTWVMAAACAVPPLV) form a helical membrane-spanning segment. Over 174-202 (GWSRYIPEGMQCSCGIDYYTRAEGFNNES) the chain is Extracellular. Asn-200 is a glycosylation site (N-linked (GlcNAc...) asparagine). Residues 203–224 (FVIYMFVCHFLIPLVVVFFCYG) traverse the membrane as a helical segment. The Cytoplasmic portion of the chain corresponds to 225–252 (RLLCAVKEAAAAQQESETTQRAEREVSR). The chain crosses the membrane as a helical span at residues 253–274 (MVVIMVVAFLICWCPYAGVAWY). Over 275–286 (IFTHQGSEFGPL) the chain is Extracellular. Residues 287-308 (FMTFPAFFAKSSSIYNPMIYIC) form a helical membrane-spanning segment. Lys-296 carries the post-translational modification N6-(retinylidene)lysine. Topologically, residues 309–353 (MNKQFRHCMITTLCCGKNPFEEEEGASTTSKTEASSVSSSSVSPA) are cytoplasmic. Residues Cys-322 and Cys-323 are each lipidated (S-palmitoyl cysteine). The interval 330–353 (EEEGASTTSKTEASSVSSSSVSPA) is disordered. Positions 334–353 (ASTTSKTEASSVSSSSVSPA) are enriched in low complexity.

It belongs to the G-protein coupled receptor 1 family. Opsin subfamily. Phosphorylated on some or all of the serine and threonine residues present in the C-terminal region. Post-translationally, contains one covalently linked retinal chromophore.

It localises to the membrane. The protein resides in the cell projection. The protein localises to the cilium. It is found in the photoreceptor outer segment. Functionally, photoreceptor required for image-forming vision at low light intensity. While most salt water fish species use retinal as chromophore, most freshwater fish use 3-dehydroretinal, or a mixture of retinal and 3-dehydroretinal. Light-induced isomerization of 11-cis to all-trans retinal triggers a conformational change that activates signaling via G-proteins. Subsequent receptor phosphorylation mediates displacement of the bound G-protein alpha subunit by arrestin and terminates signaling. The protein is Rhodopsin (rho) of Chelon saliens (Leaping mullet).